The following is a 429-amino-acid chain: Glutamate-1-semialdehyde 2,1-aminomutase 1 (429 aa).

Lys-268 carries the post-translational modification N6-(pyridoxal phosphate)lysine.

This sequence belongs to the class-III pyridoxal-phosphate-dependent aminotransferase family. HemL subfamily. Homodimer. Pyridoxal 5'-phosphate is required as a cofactor.

The protein resides in the cytoplasm. It catalyses the reaction (S)-4-amino-5-oxopentanoate = 5-aminolevulinate. It participates in porphyrin-containing compound metabolism; protoporphyrin-IX biosynthesis; 5-aminolevulinate from L-glutamyl-tRNA(Glu): step 2/2. This Lysinibacillus sphaericus (strain C3-41) protein is Glutamate-1-semialdehyde 2,1-aminomutase 1.